Consider the following 522-residue polypeptide: MSLQSLLSTKIVRATSIADAAFDAVVLVGSQDNVQQFGAIQQVSAIAPAVNNFLKLHSGAFNSTSLVQVDSSVVPSGRLILSGTGNVSRDYDDVRRYQAAARKGISMALSAGVKSPLLITLPNSRFPNAELVAALGALTPVYTPLNVREEENKQKLNQLGLLAIGNSDTSARLEKLVEAYDASFTVCRDVGEAGPERMAPPRVAEYIQGAFANGNIKVTVVDDQSVILKDFPLMAAVNRAANCVKEHQARLIRLEYVGEGETQDTFFVVGKGVTIDTGGCDLKTGGHMFGMCRDKYGSAVVGGFFKAIDVLKPKNIKAVGYMCMVRNSIGSHAYTCDEVITSRSGKRIHIYNTDAEGRLTMLDPLTLAKEEALNAKNPHLFTVATLTGHEVLSYGYYAAIMDNGPAKASGWARRVQNVGDEFGQPIEISRLHPEDFAFHMAECEQADLRQGNTKPSVATLRGHQTPAAFLQMASRIDEHGTNSSHPLKYSHIDMGGCSGDHPSVSFPNPLVTLVAGLVLPHV.

Zn(2+) contacts are provided by Lys-271 and Asp-276. Lys-283 is an active-site residue. Zn(2+) contacts are provided by Asp-294, Asp-354, and Glu-356. The active site involves Arg-358.

Belongs to the peptidase M17 family. Requires Zn(2+) as cofactor.

In Caenorhabditis elegans, this protein is Putative aminopeptidase W07G4.4 (lap-2).